Reading from the N-terminus, the 199-residue chain is Recombination protein RecR (199 aa).

A C4-type zinc finger spans residues 58 to 73; that stretch reads CKICFNITDKEVCDIC. Residues 81–176 form the Toprim domain; that stretch reads STICVVSHPM…KVTRIAHGIP (96 aa).

The protein belongs to the RecR family.

In terms of biological role, may play a role in DNA repair. It seems to be involved in an RecBC-independent recombinational process of DNA repair. It may act with RecF and RecO. The polypeptide is Recombination protein RecR (Caldanaerobacter subterraneus subsp. tengcongensis (strain DSM 15242 / JCM 11007 / NBRC 100824 / MB4) (Thermoanaerobacter tengcongensis)).